A 446-amino-acid chain; its full sequence is MGTDQGKTFTWEELAAHNTKGDLFLAIRGRVYDVTKFLSRHPGGVDTLLLGAGRDVTPVFEMYHAFGAADAIMKKYYVGTLVSNELPVFPEPTVFHKTIKTRVEGYFTDRDIDPKNRPEIWGRYALIFGSLIASYYAQLFVPFVVERTWLQVVFAIIMGFACAQVGLNPLHDASHFSVTHNPTVWKILGATHDFFNGASYLVWMYQHMLGHHPYTNIAGADPDVSTFEPDVRRIKPNQKWFVNHINQDMFVPFLYGLLAFKVRIQDINILYFVKTNDAIRVNPISTWHTVMFWGGKAFFVWYRLIVPLQYLPLGKVLLLFTVADMVSSYWLALTFQANHVVEEVQWPLPDENGIIQKDWAAMQVETTQDYAHDSHLWTSITGSLNYQAVHHLFPNVSQHHYPDILAIIKNTCSEYKVPYLVKDTFWQAFASHLEHLRVLGLRPKEE.

The region spanning 6–82 (GKTFTWEELA…MKKYYVGTLV (77 aa)) is the Cytochrome b5 heme-binding domain. The heme site is built by H41 and H64. Helical transmembrane passes span 125–145 (ALIF…PFVV) and 150–170 (LQVV…LNPL). A Histidine box-1 motif is present at residues 171–175 (HDASH). The Histidine box-2 signature appears at 207-212 (HMLGHH). The Histidine box-3 signature appears at 387-391 (QAVHH).

It belongs to the fatty acid desaturase type 1 family. It depends on Fe(2+) as a cofactor.

It is found in the membrane. The enzyme catalyses an (8Z,11Z,14Z)-icosatrienoyl-containing glycerolipid + 2 Fe(II)-[cytochrome b5] + O2 + 2 H(+) = (5Z,8Z,11Z,14Z)-eicosatetraenoyl-containing glycerolipid + 2 Fe(III)-[cytochrome b5] + 2 H2O. The catalysed reaction is an (8Z,11Z,14Z,17Z)-eicosatetraenoyl-containing glycerolipid + 2 Fe(II)-[cytochrome b5] + O2 + 2 H(+) = a (5Z,8Z,11Z,14Z,17Z)-eicosapentaenoyl-containing glycerolipid + 2 Fe(III)-[cytochrome b5] + 2 H2O. Fatty acid desaturase that introduces a cis double bond at the 5-position in 20-carbon polyunsaturated fatty acids incorporated in a glycerolipid that contain a Delta(8) double bond. Involved in the conversion of di-homo-Delta-linolenic acid to arachidonic acid. Essential in the production of eicosanoids. In Mortierella alpina (Oleaginous fungus), this protein is Acyl-lipid (8-3)-desaturase (DES1).